Here is a 119-residue protein sequence, read N- to C-terminus: Large ribosomal subunit protein bL20 (119 aa).

It belongs to the bacterial ribosomal protein bL20 family.

In terms of biological role, binds directly to 23S ribosomal RNA and is necessary for the in vitro assembly process of the 50S ribosomal subunit. It is not involved in the protein synthesizing functions of that subunit. The polypeptide is Large ribosomal subunit protein bL20 (Bradyrhizobium sp. (strain ORS 278)).